The chain runs to 270 residues: Protein tonB2 (270 aa).

Residues 1–51 (MATPQPVDARTQPWRETPGGDLVALGRPVRQALHLVRHNPAQGRVLSRRET) are Cytoplasmic-facing. The chain crosses the membrane as a helical span at residues 52 to 69 (ILLVLFALTLHGAVIHWL). Topologically, residues 70–270 (SQQRTPALPE…VSVPIDFKLN (201 aa)) are periplasmic. A disordered region spans residues 80 to 187 (VPPQVPPMTI…LTPPSANAGY (108 aa)). Over residues 94-118 (PAPPVVEPPPPEPLPPVVEEPPPPV) the composition is skewed to pro residues. A compositionally biased stretch (basic residues) spans 133–143 (PKPKPKPKPQP). Residues 144–180 (RPKPAPKAVEPAPPAPPQPAAPPAPPAPAAAPAPLTP) are compositionally biased toward pro residues. A TonB C-terminal domain is found at 180–270 (PPSANAGYLH…VSVPIDFKLN (91 aa)).

The protein belongs to the TonB family. Homodimer. Forms a complex with the accessory proteins ExbB and ExbD.

It localises to the cell inner membrane. Functionally, interacts with outer membrane receptor proteins that carry out high-affinity binding and energy dependent uptake into the periplasmic space of specific substrates. It could act to transduce energy from the cytoplasmic membrane to specific energy-requiring processes in the outer membrane, resulting in the release into the periplasm of ligands bound by these outer membrane proteins. This Pseudomonas aeruginosa (strain ATCC 15692 / DSM 22644 / CIP 104116 / JCM 14847 / LMG 12228 / 1C / PRS 101 / PAO1) protein is Protein tonB2 (tonB2).